The sequence spans 968 residues: Probable transport protein MmpL2 (968 aa).

A run of 11 helical transmembrane segments spans residues 22–42 (FAVV…LAVP), 204–224 (VIAA…LVLI), 245–265 (IFSL…AAST), 297–317 (AHVI…LSFA), 328–348 (PIAI…PAVL), 378–398 (WPGP…LALP), 763–783 (YDLL…MMII), 787–807 (VVAA…SFGL), 815–835 (ILGI…LLAV), 866–886 (TGGV…LFVF), and 890–910 (RIIG…TLVV).

Belongs to the resistance-nodulation-cell division (RND) (TC 2.A.6) family. MmpL subfamily.

The protein localises to the cell membrane. The chain is Probable transport protein MmpL2 (mmpL2) from Mycobacterium tuberculosis (strain CDC 1551 / Oshkosh).